We begin with the raw amino-acid sequence, 309 residues long: tRNA dimethylallyltransferase (309 aa).

8–15 (GPTATGKS) is a binding site for ATP. 10–15 (TATGKS) is a binding site for substrate. Residues 33 to 36 (DSRQ) form an interaction with substrate tRNA region.

The protein belongs to the IPP transferase family. Monomer. It depends on Mg(2+) as a cofactor.

The enzyme catalyses adenosine(37) in tRNA + dimethylallyl diphosphate = N(6)-dimethylallyladenosine(37) in tRNA + diphosphate. Functionally, catalyzes the transfer of a dimethylallyl group onto the adenine at position 37 in tRNAs that read codons beginning with uridine, leading to the formation of N6-(dimethylallyl)adenosine (i(6)A). The sequence is that of tRNA dimethylallyltransferase from Trichodesmium erythraeum (strain IMS101).